The following is a 100-amino-acid chain: Nucleoid-associated protein Rcas_2292 (100 aa).

This sequence belongs to the YbaB/EbfC family. As to quaternary structure, homodimer.

The protein localises to the cytoplasm. Its subcellular location is the nucleoid. Binds to DNA and alters its conformation. May be involved in regulation of gene expression, nucleoid organization and DNA protection. The chain is Nucleoid-associated protein Rcas_2292 from Roseiflexus castenholzii (strain DSM 13941 / HLO8).